A 380-amino-acid polypeptide reads, in one-letter code: PqqA peptide cyclase (380 aa).

In terms of domain architecture, Radical SAM core spans 8-223 (VNPPLWLLAE…VADYRQKMAA (216 aa)). [4Fe-4S] cluster is bound by residues cysteine 22, cysteine 26, and cysteine 29.

It belongs to the radical SAM superfamily. PqqE family. Interacts with PqqD. The interaction is necessary for activity of PqqE. Requires [4Fe-4S] cluster as cofactor.

The enzyme catalyses [PQQ precursor protein] + S-adenosyl-L-methionine = E-Y cross-linked-[PQQ precursor protein] + 5'-deoxyadenosine + L-methionine + H(+). It participates in cofactor biosynthesis; pyrroloquinoline quinone biosynthesis. Functionally, catalyzes the cross-linking of a glutamate residue and a tyrosine residue in the PqqA protein as part of the biosynthesis of pyrroloquinoline quinone (PQQ). This is PqqA peptide cyclase from Klebsiella pneumoniae (strain 342).